Consider the following 402-residue polypeptide: Argininosuccinate synthase (402 aa).

ATP-binding positions include 9–17 (AYSGGLDTS) and Ala-36. Positions 87 and 92 each coordinate L-citrulline. Gly-117 is a binding site for ATP. Residues Thr-119, Asn-123, and Asp-124 each coordinate L-aspartate. L-citrulline is bound at residue Asn-123. The L-citrulline site is built by Arg-127, Ser-176, Ser-185, Glu-261, and Tyr-273.

The protein belongs to the argininosuccinate synthase family. Type 1 subfamily. As to quaternary structure, homotetramer.

The protein resides in the cytoplasm. It catalyses the reaction L-citrulline + L-aspartate + ATP = 2-(N(omega)-L-arginino)succinate + AMP + diphosphate + H(+). The protein operates within amino-acid biosynthesis; L-arginine biosynthesis; L-arginine from L-ornithine and carbamoyl phosphate: step 2/3. The protein is Argininosuccinate synthase of Deinococcus radiodurans (strain ATCC 13939 / DSM 20539 / JCM 16871 / CCUG 27074 / LMG 4051 / NBRC 15346 / NCIMB 9279 / VKM B-1422 / R1).